The primary structure comprises 170 residues: Large ribosomal subunit protein uL11 (170 aa).

It belongs to the universal ribosomal protein uL11 family. In terms of assembly, part of the ribosomal stalk of the 50S ribosomal subunit. Interacts with L10 and the large rRNA to form the base of the stalk. L10 forms an elongated spine to which L12 dimers bind in a sequential fashion forming a multimeric L10(L12)X complex.

Functionally, forms part of the ribosomal stalk which helps the ribosome interact with GTP-bound translation factors. This Saccharolobus solfataricus (strain ATCC 35092 / DSM 1617 / JCM 11322 / P2) (Sulfolobus solfataricus) protein is Large ribosomal subunit protein uL11.